Reading from the N-terminus, the 581-residue chain is Pyridine nucleotide-disulfide oxidoreductase domain-containing protein 2 (581 aa).

38-71 (VVIGAGHNGLVVAAYLQRLGVNTAVFERRHVIGG) contacts FAD.

This sequence belongs to the carotenoid/retinoid oxidoreductase family. In terms of assembly, interacts with COX5B; this interaction may contribute to localize PYROXD2 to the inner face of the inner mitochondrial membrane.

The protein localises to the mitochondrion matrix. Functionally, probable oxidoreductase that may play a role as regulator of mitochondrial function. This chain is Pyridine nucleotide-disulfide oxidoreductase domain-containing protein 2, found in Pongo abelii (Sumatran orangutan).